The primary structure comprises 441 residues: Velvet complex subunit B (441 aa).

In terms of domain architecture, Velvet spans Met-1–Arg-173. 3 disordered regions span residues Gly-200 to Leu-220, Arg-234 to Thr-295, and Met-341 to Ala-396. Low complexity-rich tracts occupy residues Asp-272–Ser-283 and Pro-361–Gly-375.

It belongs to the velvet family. VelB subfamily. As to quaternary structure, component of the heterotrimeric velvet complex composed of laeA, veA and velB; VeA acting as a bridging protein between laeA and velB.

The protein localises to the nucleus. Its subcellular location is the cytoplasm. Its function is as follows. Component of the velvet transcription factor complex that controls sexual/asexual developmental ratio in response to light, promoting sexual development in the darkness while stimulating asexual sporulation under illumination. The velvet complex acts as a global regulator for secondary metabolite gene expression and is required for the production of chaetoglobosin A. The sequence is that of Velvet complex subunit B from Chaetomium globosum (strain ATCC 6205 / CBS 148.51 / DSM 1962 / NBRC 6347 / NRRL 1970) (Soil fungus).